The sequence spans 353 residues: Protein RecA (353 aa).

68 to 75 provides a ligand contact to ATP; sequence GPESSGKT.

This sequence belongs to the RecA family.

The protein localises to the cytoplasm. Can catalyze the hydrolysis of ATP in the presence of single-stranded DNA, the ATP-dependent uptake of single-stranded DNA by duplex DNA, and the ATP-dependent hybridization of homologous single-stranded DNAs. It interacts with LexA causing its activation and leading to its autocatalytic cleavage. This Roseiflexus sp. (strain RS-1) protein is Protein RecA.